Here is a 342-residue protein sequence, read N- to C-terminus: Polyprenyl transferase trt2 (342 aa).

The next 9 helical transmembrane spans lie at 71–91 (VVGV…TVLL), 95–115 (IILS…NDLI), 141–161 (AALL…LLPS), 163–183 (CTVE…GKRF), 187–207 (PQLI…SLEV), 216–236 (TLSM…VYAC), 261–278 (LAYG…LGGV), 282–304 (LGLP…FLSV), and 319–339 (AKSS…LEYL).

Belongs to the UbiA prenyltransferase family. Mg(2+) serves as cofactor.

It is found in the membrane. The enzyme catalyses 3,5-dimethylorsellinate + (2E,6E)-farnesyl diphosphate = (3R)-3-farnesyl-6-hydroxy-2,3,5-trimethyl-4-oxocyclohexa-1,5-diene-1-carboxylate + diphosphate + H(+). It functions in the pathway secondary metabolite biosynthesis; terpenoid biosynthesis. Its function is as follows. Polyprenyl transferase; part of the gene cluster that mediates the biosynthesis of terretonin, a fungal meroterpenoid that acts as a mycotoxin. The first step of the pathway is the synthesis of 3,5-dimethylorsellinic acid (DMOA) by the polyketide synthase trt4. DMOA is then prenylated into farnesyl-DMOA by the polyprenyl transferase trt2. Methylation by the methyltransferase trt5 then leads to farnesyl-DMOA methyl ester which is further subject to epoxidation by the FAD-dependent monooxygenase trt8 to yield epoxyfarnesyl-DMOA methyl ester. Cyclization of epoxyfarnesyl-DMOA methyl ester by the terpene cyclase trt1 leads to a tetracycle intermediate which is in turn converted to preterretonin. Dehydrogenase trt9 comes next to transform preterretonin to preterrenoid. The FAD-dependent monooxygenase trt3 is then required for the C-hydroxylation at C16 of preterrenoid to yield terrenoid. The cytochrome P450 trt6 catalyzes three successive oxidations to transform terrenoid into an unstable intermediate, which then undergoes the D-ring expansion and unusual rearrangement of the methoxy group to afford the core skeleton of terretonin. Trt14 catalyzes the D-ring expansion of terretonin involving intramolecular methoxy rearrangement as well as the hydrolysis of the expanded D-ring and the methyl ester moiety. Finally, the nonheme iron-dependent dioxygenase trt7 accomplishes the last two oxidation reactions steps to complete the biosynthesis of terretonin. Terretonin C is produced via spontaneous decarboxylation of the terretonin precursor. Another shunt product of the terretonin biosynthesis is dihydrofarnesyl-DMOA, derived from epoxyfarnesyl-DMOA through hydrolysis of the epoxide. This is Polyprenyl transferase trt2 from Aspergillus terreus (strain NIH 2624 / FGSC A1156).